The primary structure comprises 441 residues: Thymidine phosphorylase (441 aa).

The protein belongs to the thymidine/pyrimidine-nucleoside phosphorylase family. As to quaternary structure, homodimer.

The catalysed reaction is thymidine + phosphate = 2-deoxy-alpha-D-ribose 1-phosphate + thymine. It participates in pyrimidine metabolism; dTMP biosynthesis via salvage pathway; dTMP from thymine: step 1/2. In terms of biological role, the enzymes which catalyze the reversible phosphorolysis of pyrimidine nucleosides are involved in the degradation of these compounds and in their utilization as carbon and energy sources, or in the rescue of pyrimidine bases for nucleotide synthesis. In Chromobacterium violaceum (strain ATCC 12472 / DSM 30191 / JCM 1249 / CCUG 213 / NBRC 12614 / NCIMB 9131 / NCTC 9757 / MK), this protein is Thymidine phosphorylase.